Consider the following 273-residue polypeptide: DnaJ homolog subfamily C member 27-A (273 aa).

GTP is bound by residues 23–30 (GNAEVGKS), 71–75 (DMAGH), and 134–137 (NKID). Residues 217-273 (DSWDMLGVKPGATRDEVNKAYRKLAVLLHPDKCMAPGSEDAFKAVVNARTALLKNIK) form the J domain.

The protein belongs to the small GTPase superfamily. Rab family.

It is found in the nucleus. GTPase possibly involved in regulation of the MEK/ERK pathway. The chain is DnaJ homolog subfamily C member 27-A (dnajc27-a) from Xenopus laevis (African clawed frog).